The following is a 454-amino-acid chain: MQRYAVVLAAGKGTRMKSKLYKVLHKVADKTMIEHVVNSVQQSGADQIVTIVGHGAERVKDTLGDQSAYGFQEEQLGTAHAVKMAADELKDREGTTLVVCGDTPLITADTLNALVKHHEDNQADATVLSATAPNPFGYGRIVRDEEGRLSNIVEQKDASEAEQQIDEISSGIFAFDNQTLFRLLDKVKNDNAQGEYYLPDVLSLILEEGGKAEVYHTNDFDEIMGVNDRVALSKAEQAMRQRINEYHMRNGVTLIDPSSTYIASDVIIGMDTVIEPGVHIGSGTQIGEDTVIGQYSDINRSTIGDRTTVKQSVINDATVGDDTTVGPFAQLRPNAHLGNEVKVGNFVEVKKADIKDGAKVSHLSYIGDAEIGERTNIGCGSITVNYDGKNKFKTIIGKDSFIGCNTNLVAPVILGDDVLIAAGSTITDDVPNDSLALARSRQTTKPGYLNKNKE.

The interval 1–229 (MQRYAVVLAA…FDEIMGVNDR (229 aa)) is pyrophosphorylase. Residues 8–11 (LAAG), Lys-22, Gln-72, and 77–78 (GT) contribute to the UDP-N-acetyl-alpha-D-glucosamine site. Asp-102 is a Mg(2+) binding site. Residues Gly-139, Glu-154, and Asn-227 each contribute to the UDP-N-acetyl-alpha-D-glucosamine site. Asn-227 lines the Mg(2+) pocket. The linker stretch occupies residues 230 to 250 (VALSKAEQAMRQRINEYHMRN). The segment at 251 to 454 (GVTLIDPSST…KPGYLNKNKE (204 aa)) is N-acetyltransferase. Residues Arg-332 and Lys-350 each coordinate UDP-N-acetyl-alpha-D-glucosamine. Residue His-362 is the Proton acceptor of the active site. UDP-N-acetyl-alpha-D-glucosamine-binding residues include Tyr-365 and Asn-376. Acetyl-CoA-binding positions include 385–386 (NY), Ala-422, and Arg-439.

It in the N-terminal section; belongs to the N-acetylglucosamine-1-phosphate uridyltransferase family. This sequence in the C-terminal section; belongs to the transferase hexapeptide repeat family. Homotrimer. Mg(2+) serves as cofactor.

The protein localises to the cytoplasm. It carries out the reaction alpha-D-glucosamine 1-phosphate + acetyl-CoA = N-acetyl-alpha-D-glucosamine 1-phosphate + CoA + H(+). The enzyme catalyses N-acetyl-alpha-D-glucosamine 1-phosphate + UTP + H(+) = UDP-N-acetyl-alpha-D-glucosamine + diphosphate. The protein operates within nucleotide-sugar biosynthesis; UDP-N-acetyl-alpha-D-glucosamine biosynthesis; N-acetyl-alpha-D-glucosamine 1-phosphate from alpha-D-glucosamine 6-phosphate (route II): step 2/2. It functions in the pathway nucleotide-sugar biosynthesis; UDP-N-acetyl-alpha-D-glucosamine biosynthesis; UDP-N-acetyl-alpha-D-glucosamine from N-acetyl-alpha-D-glucosamine 1-phosphate: step 1/1. It participates in bacterial outer membrane biogenesis; LPS lipid A biosynthesis. Functionally, catalyzes the last two sequential reactions in the de novo biosynthetic pathway for UDP-N-acetylglucosamine (UDP-GlcNAc). The C-terminal domain catalyzes the transfer of acetyl group from acetyl coenzyme A to glucosamine-1-phosphate (GlcN-1-P) to produce N-acetylglucosamine-1-phosphate (GlcNAc-1-P), which is converted into UDP-GlcNAc by the transfer of uridine 5-monophosphate (from uridine 5-triphosphate), a reaction catalyzed by the N-terminal domain. In Staphylococcus carnosus (strain TM300), this protein is Bifunctional protein GlmU.